The sequence spans 490 residues: Aspartyl/glutamyl-tRNA(Asn/Gln) amidotransferase subunit B (490 aa).

It belongs to the GatB/GatE family. GatB subfamily. Heterotrimer of A, B and C subunits.

It carries out the reaction L-glutamyl-tRNA(Gln) + L-glutamine + ATP + H2O = L-glutaminyl-tRNA(Gln) + L-glutamate + ADP + phosphate + H(+). The enzyme catalyses L-aspartyl-tRNA(Asn) + L-glutamine + ATP + H2O = L-asparaginyl-tRNA(Asn) + L-glutamate + ADP + phosphate + 2 H(+). Allows the formation of correctly charged Asn-tRNA(Asn) or Gln-tRNA(Gln) through the transamidation of misacylated Asp-tRNA(Asn) or Glu-tRNA(Gln) in organisms which lack either or both of asparaginyl-tRNA or glutaminyl-tRNA synthetases. The reaction takes place in the presence of glutamine and ATP through an activated phospho-Asp-tRNA(Asn) or phospho-Glu-tRNA(Gln). The protein is Aspartyl/glutamyl-tRNA(Asn/Gln) amidotransferase subunit B of Burkholderia pseudomallei (strain 1106a).